A 503-amino-acid polypeptide reads, in one-letter code: Arginyl-tRNA--protein transferase 1 (503 aa).

It belongs to the R-transferase family.

The protein localises to the cytoplasm. The catalysed reaction is an N-terminal L-alpha-aminoacyl-[protein] + L-arginyl-tRNA(Arg) = an N-terminal L-arginyl-L-aminoacyl-[protein] + tRNA(Arg) + H(+). Functionally, involved in the post-translational conjugation of arginine to the N-terminal aspartate or glutamate of a protein. This arginylation is required for degradation of the protein via the ubiquitin pathway. Does not arginylate cysteine residues. This Saccharomyces cerevisiae (strain ATCC 204508 / S288c) (Baker's yeast) protein is Arginyl-tRNA--protein transferase 1 (ATE1).